Consider the following 364-residue polypeptide: N-acetyl-gamma-glutamyl-phosphate reductase (364 aa).

The active site involves C157.

The protein belongs to the NAGSA dehydrogenase family. Type 1 subfamily.

The protein resides in the cytoplasm. The enzyme catalyses N-acetyl-L-glutamate 5-semialdehyde + phosphate + NADP(+) = N-acetyl-L-glutamyl 5-phosphate + NADPH + H(+). It functions in the pathway amino-acid biosynthesis; L-arginine biosynthesis; N(2)-acetyl-L-ornithine from L-glutamate: step 3/4. Functionally, catalyzes the NADPH-dependent reduction of N-acetyl-5-glutamyl phosphate to yield N-acetyl-L-glutamate 5-semialdehyde. The chain is N-acetyl-gamma-glutamyl-phosphate reductase from Bifidobacterium longum (strain DJO10A).